Reading from the N-terminus, the 1021-residue chain is Ras-related protein Rab-44 (1021 aa).

Residues 1–40 (METGQRTSRKVRKLGSNRRRQTREPADGEGAAVAPEPESW) are disordered. Residues 7–21 (TSRKVRKLGSNRRRQ) are compositionally biased toward basic residues. The EF-hand domain maps to 77–112 (GSKEESEMIFDWVDVERKGHLSLEEFSSGLKNIFGS). Positions 113-133 (SQSPHRLRRRKPLPSKRVSAT) are disordered. Residues 117 to 126 (HRLRRRKPLP) are compositionally biased toward basic residues. Residues 191-315 (LAKMTSRLQE…AGRLEEVRGQ (125 aa)) adopt a coiled-coil conformation. 3 disordered regions span residues 339-405 (SFPG…QTPR), 419-483 (LFGQ…LLWG), and 495-827 (VLIP…GGPQ). Basic and acidic residues predominate over residues 443 to 467 (KDNKGVDPHEQDIRAEQPVEPHDPD). Residues 501–514 (DGPPPPANSPPPQA) show a composition bias toward pro residues. Residues 532-559 (PGSWAPPSGAQPGAGAGPQEPTQTPPTM) show a composition bias toward low complexity. Residues 676–685 (SEEGKQEGRG) show a composition bias toward basic and acidic residues. Polar residues-rich tracts occupy residues 688-697 (DLSSEQSEQS) and 710-727 (LPQQ…TPQA). The segment covering 736–759 (PGKSAPPRGSPPRGAQPGAGAGPQ) has biased composition (low complexity). Over residues 783-810 (HAEEQGPPHSREPRAESRLEDPGMDSRE) the composition is skewed to basic and acidic residues. GTP-binding positions include 840–847 (GDSNVGKT), 888–892 (DTAGQ), and 946–949 (NKMD). S-geranylgeranyl cysteine attachment occurs at residues Cys1019 and Cys1020.

Belongs to the small GTPase superfamily. Rab family.

Its subcellular location is the cell membrane. In Homo sapiens (Human), this protein is Ras-related protein Rab-44 (RAB44).